The sequence spans 394 residues: Acetate kinase (394 aa).

Asn-10 serves as a coordination point for Mg(2+). Residue Lys-17 participates in ATP binding. Arg-87 lines the substrate pocket. Catalysis depends on Asp-144, which acts as the Proton donor/acceptor. Residues 204–208 (HLGNG), 279–281 (DMR), and 327–331 (GIGEN) each bind ATP. Glu-381 is a Mg(2+) binding site.

The protein belongs to the acetokinase family. As to quaternary structure, homodimer. The cofactor is Mg(2+). Requires Mn(2+) as cofactor.

The protein localises to the cytoplasm. The enzyme catalyses acetate + ATP = acetyl phosphate + ADP. It functions in the pathway metabolic intermediate biosynthesis; acetyl-CoA biosynthesis; acetyl-CoA from acetate: step 1/2. Functionally, catalyzes the formation of acetyl phosphate from acetate and ATP. Can also catalyze the reverse reaction. This is Acetate kinase from Pseudomonas aeruginosa (strain LESB58).